The chain runs to 405 residues: L-rhamnonate dehydratase (405 aa).

Positions 33 and 59 each coordinate substrate. Mg(2+)-binding residues include D226, E252, and E280. The active-site Proton acceptor is H329. E349 contributes to the substrate binding site.

This sequence belongs to the mandelate racemase/muconate lactonizing enzyme family. RhamD subfamily. In terms of assembly, homooctamer; tetramer of dimers. Requires Mg(2+) as cofactor.

It catalyses the reaction L-rhamnonate = 2-dehydro-3-deoxy-L-rhamnonate + H2O. In terms of biological role, catalyzes the dehydration of L-rhamnonate to 2-keto-3-deoxy-L-rhamnonate (KDR). In Salmonella typhi, this protein is L-rhamnonate dehydratase.